A 641-amino-acid chain; its full sequence is Chaperone protein DnaK (641 aa).

At threonine 199 the chain carries Phosphothreonine; by autocatalysis. Residues 577–590 (KGDNKDEIETRTQK) show a composition bias toward basic and acidic residues. The tract at residues 577–641 (KGDNKDEIET…EFEEVDDKKK (65 aa)) is disordered. The segment covering 617–626 (GAEQASAQQD) has biased composition (low complexity). Acidic residues predominate over residues 627 to 641 (DVVDAEFEEVDDKKK).

Belongs to the heat shock protein 70 family.

In terms of biological role, acts as a chaperone. This chain is Chaperone protein DnaK, found in Thioalkalivibrio sulfidiphilus (strain HL-EbGR7).